The sequence spans 65 residues: Large ribosomal subunit protein bL35 (65 aa).

This sequence belongs to the bacterial ribosomal protein bL35 family.

The sequence is that of Large ribosomal subunit protein bL35 from Prochlorococcus marinus (strain MIT 9313).